The sequence spans 444 residues: MSSSYINVIGAGLAGSEAAYQIAKRGIPVKLYEMRGVKSTPQHKTADFAELVCSNSLRGDALTNAVGLLKEEMRRLDSVILKSAEATRVPAGGALAVDREGFSQMVTELVTNHPLIEVIREEITEIPEDAITVIATGPLTSDALAEKIHALNGGDGFYFYDAAAPIIDVNTIDMTKVYLKSRYDKGEAAYLNAPMTKQEFMDFHDALVNAEEAPLNSFEKEKYFEGCMPIEVMAKRGIKTMLYGPMKPVGLEYPDDYQGPRDGEYKTPYAVVQLRQDNAAGSLYNIVGFQTHLKWGEQKRVFQMIPGLENAEFVRYGVMHRNSYMDSPNLLEQTFRSKKLPNLFFAGQMTGVEGYVESAASGLVAGINAARLFKGEEALVFPETTAIGSLPHYVTHADSKHFQPMNVNFGIIKELDGPRIRDKKERYEKIAERALQDLQPYLDK.

G10 to G15 serves as a coordination point for FAD.

Belongs to the MnmG family. TrmFO subfamily. It depends on FAD as a cofactor.

It is found in the cytoplasm. The catalysed reaction is uridine(54) in tRNA + (6R)-5,10-methylene-5,6,7,8-tetrahydrofolate + NADH + H(+) = 5-methyluridine(54) in tRNA + (6S)-5,6,7,8-tetrahydrofolate + NAD(+). It carries out the reaction uridine(54) in tRNA + (6R)-5,10-methylene-5,6,7,8-tetrahydrofolate + NADPH + H(+) = 5-methyluridine(54) in tRNA + (6S)-5,6,7,8-tetrahydrofolate + NADP(+). In terms of biological role, catalyzes the folate-dependent formation of 5-methyl-uridine at position 54 (M-5-U54) in all tRNAs. This chain is Methylenetetrahydrofolate--tRNA-(uracil-5-)-methyltransferase TrmFO, found in Streptococcus sanguinis (strain SK36).